The following is a 510-amino-acid chain: Cytochrome P450 52C2 (510 aa).

Cys458 is a heme binding site.

The protein belongs to the cytochrome P450 family. It depends on heme as a cofactor.

Its subcellular location is the membrane. Together with an NADPH cytochrome P450 the enzyme system catalyzes the terminal hydroxylation as the first step in the assimilation of alkanes and fatty acids. This is Cytochrome P450 52C2 (CYP52C2) from Candida maltosa (Yeast).